The chain runs to 152 residues: Large ribosomal subunit protein uL15 (152 aa).

Residues 18 to 37 (RVARGIGSGKGKTAGRGVKG) form a disordered region. Positions 23–35 (IGSGKGKTAGRGV) are enriched in gly residues.

It belongs to the universal ribosomal protein uL15 family. In terms of assembly, part of the 50S ribosomal subunit.

Functionally, binds to the 23S rRNA. The chain is Large ribosomal subunit protein uL15 from Rickettsia bellii (strain OSU 85-389).